The primary structure comprises 640 residues: Translation factor GUF1, mitochondrial (640 aa).

A mitochondrion-targeting transit peptide spans 1-26 (MRRLRSLYLQSSICFRRFNHYSAKDT). One can recognise a tr-type G domain in the interval 39–223 (ENYRNFSIVA…AIIDRIPPPT (185 aa)). Residues 48–55 (AHVDHGKS), 115–119 (DTPGH), and 169–172 (NKID) contribute to the GTP site.

Belongs to the TRAFAC class translation factor GTPase superfamily. Classic translation factor GTPase family. LepA subfamily.

It localises to the mitochondrion inner membrane. It carries out the reaction GTP + H2O = GDP + phosphate + H(+). Its function is as follows. Promotes mitochondrial protein synthesis. May act as a fidelity factor of the translation reaction, by catalyzing a one-codon backward translocation of tRNAs on improperly translocated ribosomes. Binds to mitochondrial ribosomes in a GTP-dependent manner. The protein is Translation factor GUF1, mitochondrial of Lachancea thermotolerans (strain ATCC 56472 / CBS 6340 / NRRL Y-8284) (Yeast).